The primary structure comprises 466 residues: Alpha-galacturonidase (466 aa).

Val-11–Thr-78 lines the NAD(+) pocket. Asn-157 is a binding site for substrate. Cys-179 contributes to the Mn(2+) binding site. His-180 serves as the catalytic Proton donor. Position 216 (His-216) interacts with Mn(2+).

It belongs to the glycosyl hydrolase 4 family. As to quaternary structure, homotetramer. It depends on NAD(+) as a cofactor. Mn(2+) serves as cofactor.

The enzyme catalyses [(1-&gt;4)-alpha-D-galacturonosyl](n) + H2O = alpha-D-galacturonate + [(1-&gt;4)-alpha-D-galacturonosyl](n-1). In terms of biological role, alpha-galacturonidase able to catalyze the hydrolysis of the chromogenic substrate p-nitrophenyl-alpha-D-galacturonic acid (pNPalphaGalUA). It is probable that alpha-1,4-di-galacturonate (GalUA(2)) is the naturally occurring substrate. The sequence is that of Alpha-galacturonidase from Lachnoclostridium phytofermentans (strain ATCC 700394 / DSM 18823 / ISDg) (Clostridium phytofermentans).